A 353-amino-acid chain; its full sequence is Probable WRKY transcription factor 7 (353 aa).

The segment at 117-259 is disordered; the sequence is VEEKKPETSS…SSRCHCSKKR (143 aa). Low complexity predominate over residues 158–176; sequence SHNNNNNQNQTKNGSSSSS. Composition is skewed to polar residues over residues 184–204 and 213–229; these read APST…SFMS and THMS…QLSG. Residues 275–341 constitute a DNA-binding region (WRKY); sequence KMADIPSDEF…YEGDHNHALV (67 aa).

Belongs to the WRKY group II-d family. In young, mature and senescent leaves.

The protein localises to the nucleus. Transcription factor. Interacts specifically with the W box (5'-(T)TGAC[CT]-3'), a frequently occurring elicitor-responsive cis-acting element. The sequence is that of Probable WRKY transcription factor 7 (WRKY7) from Arabidopsis thaliana (Mouse-ear cress).